Here is a 241-residue protein sequence, read N- to C-terminus: Ribonuclease PH (241 aa).

Phosphate contacts are provided by residues Arg89 and 127 to 129 (GTR).

It belongs to the RNase PH family. Homohexameric ring arranged as a trimer of dimers.

It carries out the reaction tRNA(n+1) + phosphate = tRNA(n) + a ribonucleoside 5'-diphosphate. Phosphorolytic 3'-5' exoribonuclease that plays an important role in tRNA 3'-end maturation. Removes nucleotide residues following the 3'-CCA terminus of tRNAs; can also add nucleotides to the ends of RNA molecules by using nucleoside diphosphates as substrates, but this may not be physiologically important. Probably plays a role in initiation of 16S rRNA degradation (leading to ribosome degradation) during starvation. This is Ribonuclease PH from Xanthomonas axonopodis pv. citri (strain 306).